Consider the following 260-residue polypeptide: Uroplakin-1b (260 aa).

Over 1–12 (MAKDDSSVRCFQ) the chain is Cytoplasmic. The helical transmembrane segment at 13–38 (GLLIFGNVIVGMCGIALTAECIFFVS) threads the bilayer. At 39 to 60 (DQHSLYPLLEATDNDDIYGAAW) the chain is on the extracellular side. A helical membrane pass occupies residues 61-81 (IGMFVGICLFCLSVLGIVGIM). Topologically, residues 82–86 (KSNRK) are cytoplasmic. The helical transmembrane segment at 87–107 (ILLAYFILMFIVYGFEVASCI) threads the bilayer. The Extracellular segment spans residues 108-229 (TAATQRDFFT…ELISGPMNRH (122 aa)). The helical transmembrane segment at 230 to 250 (AWGVAWFGFAILCWTFWVLLG) threads the bilayer. The Cytoplasmic segment spans residues 251–260 (TMFYWSRIEY).

This sequence belongs to the tetraspanin (TM4SF) family. As to quaternary structure, heterodimer with uroplakin-3A (UPK3A) or uroplakin-3B (UPK3B).

The protein resides in the membrane. Component of the asymmetric unit membrane (AUM); a highly specialized biomembrane elaborated by terminally differentiated urothelial cells. This Neovison vison (American mink) protein is Uroplakin-1b (UPK1B).